The chain runs to 556 residues: 2-succinyl-5-enolpyruvyl-6-hydroxy-3-cyclohexene-1-carboxylate synthase (556 aa).

Belongs to the TPP enzyme family. MenD subfamily. As to quaternary structure, homodimer. It depends on Mg(2+) as a cofactor. Mn(2+) is required as a cofactor. The cofactor is thiamine diphosphate.

It catalyses the reaction isochorismate + 2-oxoglutarate + H(+) = 5-enolpyruvoyl-6-hydroxy-2-succinyl-cyclohex-3-ene-1-carboxylate + CO2. It participates in quinol/quinone metabolism; 1,4-dihydroxy-2-naphthoate biosynthesis; 1,4-dihydroxy-2-naphthoate from chorismate: step 2/7. Its pathway is quinol/quinone metabolism; menaquinone biosynthesis. Its function is as follows. Catalyzes the thiamine diphosphate-dependent decarboxylation of 2-oxoglutarate and the subsequent addition of the resulting succinic semialdehyde-thiamine pyrophosphate anion to isochorismate to yield 2-succinyl-5-enolpyruvyl-6-hydroxy-3-cyclohexene-1-carboxylate (SEPHCHC). The protein is 2-succinyl-5-enolpyruvyl-6-hydroxy-3-cyclohexene-1-carboxylate synthase of Escherichia coli O8 (strain IAI1).